The chain runs to 97 residues: Large ribosomal subunit protein uL23 (97 aa).

Belongs to the universal ribosomal protein uL23 family. Part of the 50S ribosomal subunit. Contacts protein L29, and trigger factor when it is bound to the ribosome.

In terms of biological role, one of the early assembly proteins it binds 23S rRNA. One of the proteins that surrounds the polypeptide exit tunnel on the outside of the ribosome. Forms the main docking site for trigger factor binding to the ribosome. This is Large ribosomal subunit protein uL23 from Clostridium botulinum (strain ATCC 19397 / Type A).